The sequence spans 198 residues: Copy number protein (198 aa).

Its subcellular location is the cell membrane. Its function is as follows. Involved in copy number control of pIP404. This basic and hydrophobic protein may exert its effect from the cytoplasmic membrane. The chain is Copy number protein (cop) from Clostridium perfringens.